A 1501-amino-acid polypeptide reads, in one-letter code: MSNIKSTQDSSHNAVARSSSASFAASEESFTGITHDKDEQSDTPADKLTKMLTGPARDTASQISATVSEMAPDVVSKVESFADALSRHTTRSGAFNMDSDSDDGFDAHAIFESFVRDADEQGIHIRKAGVTIEDVSAKGVDASALEGATFGNILCLPLTIFKGIKAKRHQKMRQIISNVNALAEAGEMILVLGRPGAGCSSFLKVTAGEIDQFAGGVSGEVAYDGIPQEEMMKRYKADVIYNGELDVHFPYLTVKQTLDFAIACKTPALRVNNVSKKEYIASRRDLYATIFGLRHTYNTKVGNDFVRGVSGGERKRVSIAEALAAKGSIYCWDNATRGLDASTALEYAKAIRIMTNLLKSTAFVTIYQASENIYETFDKVTVLYSGKQIYFGLIHEAKPYFAKMGYLCPPRQATAEFLTALTDPNGFHLIKPGYENKVPRTAEEFETYWLNSPEFAQMKKDIAAYKEKVNTEKTKEVYDESMAQEKSKYTRKKSYYTVSYWEQVKLCTQRGFQRIYGNKSYTVINVCSAIIQSFITGSLFYNTPSSTSGAFSRGGVLYFALLYYSLMGLANISFEHRPILQKHKGYSLYHPSAEAIGSTLASFPFRMIGLTCFFIILFFLSGLHRTAGSFFTIYLFLTMCSEAINGLFEMVSSVCDTLSQANSISGILMMSISMYSTYMIQLPSMHPWFKWISYVLPIRYAFESMLNAEFHGRHMDCANTLVPSGGDYDNLSDDYKVCAFVGSKPGQSYVLGDDYLKNQFQYVYKHTWRNFGILWCFLLGYVVLKVIFTEYKRPVKGGGDALIFKKGSKRFIAHADEESPDNVNDIDAKEQFSSESSGANDEVFDDLEAKGVFIWKDVCFTIPYEGGKRMLLDNVSGYCIPGTMTALMGESGAGKTTLLNTLAQRNVGIITGDMLVNGRPIDASFERRTGYVQQQDIHIAELTVRESLQFSARMRRPQHLPDSEKMDYVEKIIRVLGMEEYAEALVGEVGCGLNVEQRKKLSIGVELVAKPDLLLFLDEPTSGLDSQSSWAIIQLLRKLSKAGQSILCTIHQPSATLFEEFDRLLLLRKGGQTVYFGDIGKNSATILNYFERNGARKCDSSENPAEYILEAIGAGATASVKEDWHEKWLNSVEFEQTKEKVQDLINDLSKQETKSEVGDKPSKYATSYAYQFRYVLIRTSTSFWRSLNYIMSKMMLMLVGGLYIGFTFFNVGKSYVGLQNAMFAAFISIILSAPAMNQIQGRAIASRELFEVRESQSNMFHWSLVLITQYLSELPYHLFFSTIFFVSSYFPLRIFFEASRSAVYFLNYCIMFQLYYVGLGLMILYMSPNLPSANVILGLCLSFMLSFCGVTQPVSLMPGFWTFMWKASPYTYFVQNLVGIMLHKKPVVCKKKELNYFNPPNGSTCGEYMKPFLEKATGYIENPDATSDCAYCIYEVGDNYLTHISSKYSYLWRNFGIFWIYIFFNIIAMVCVYYLFHVRQSSFLSPVSILNKIKNIRKKKQ.

Residues 1 to 17 (MSNIKSTQDSSHNAVAR) are compositionally biased toward polar residues. Residues 1–56 (MSNIKSTQDSSHNAVARSSSASFAASEESFTGITHDKDEQSDTPADKLTKMLTGPA) form a disordered region. The residue at position 2 (serine 2) is an N-acetylserine. The span at 18–30 (SSSASFAASEESF) shows a compositional bias: low complexity. 2 positions are modified to phosphoserine: serine 26 and serine 29. Positions 34–49 (THDKDEQSDTPADKLT) are enriched in basic and acidic residues. Phosphoserine is present on residues serine 64, serine 80, and serine 86. The 250-residue stretch at 161–410 (FKGIKAKRHQ…FAKMGYLCPP (250 aa)) folds into the ABC transporter 1 domain. N-linked (GlcNAc...) asparagine glycosylation is found at asparagine 273, asparagine 334, and asparagine 518. 5 consecutive transmembrane segments (helical) span residues 521–541 (YTVI…SLFY), 554–574 (GGVL…NISF), 600–620 (LASF…LFFL), 628–648 (GSFF…NGLF), and 664–680 (ISGI…TYMI). Asparagine 730 carries an N-linked (GlcNAc...) asparagine glycan. The chain crosses the membrane as a helical span at residues 771–789 (FGILWCFLLGYVVLKVIFT). Residues 853 to 1095 (FIWKDVCFTI…ILNYFERNGA (243 aa)) enclose the ABC transporter 2 domain. An N-linked (GlcNAc...) asparagine glycan is attached at asparagine 874. Residue 889–896 (GESGAGKT) participates in ATP binding. The residue at position 1153 (threonine 1153) is a Phosphothreonine. The next 4 helical transmembrane spans lie at 1190-1212 (IMSK…FNVG), 1216-1236 (VGLQ…APAM), 1277-1296 (HLFF…RIFF), and 1333-1352 (ANVI…GVTQ). N-linked (GlcNAc...) asparagine glycosylation occurs at asparagine 1401. Residues 1455 to 1475 (FGIFWIYIFFNIIAMVCVYYL) traverse the membrane as a helical segment.

The protein belongs to the ABC transporter superfamily. ABCG family. PDR (TC 3.A.1.205) subfamily.

Its subcellular location is the membrane. Could be an ATP-dependent permease. Confers hyper-resistance to the mutagens 4-nitroquinoline-N-oxide (4-NQO) and triaziquone, as well as to the chemicals sulphomethuron methyl phenanthroline when present in multiple copies. Exhibits nucleoside triphosphatase activity. This chain is Protein SNQ2 (SNQ2), found in Saccharomyces cerevisiae (strain ATCC 204508 / S288c) (Baker's yeast).